A 365-amino-acid polypeptide reads, in one-letter code: Aminomethyltransferase (365 aa).

Belongs to the GcvT family. As to quaternary structure, the glycine cleavage system is composed of four proteins: P, T, L and H.

The catalysed reaction is N(6)-[(R)-S(8)-aminomethyldihydrolipoyl]-L-lysyl-[protein] + (6S)-5,6,7,8-tetrahydrofolate = N(6)-[(R)-dihydrolipoyl]-L-lysyl-[protein] + (6R)-5,10-methylene-5,6,7,8-tetrahydrofolate + NH4(+). Its function is as follows. The glycine cleavage system catalyzes the degradation of glycine. The polypeptide is Aminomethyltransferase (Yersinia enterocolitica serotype O:8 / biotype 1B (strain NCTC 13174 / 8081)).